Consider the following 390-residue polypeptide: Transcription factor bHLH76 (390 aa).

Residues 147 to 217 (NVSEDSQSSG…SEKQPSDSLK (71 aa)) form a disordered region. A compositionally biased stretch (basic and acidic residues) spans 207–217 (NSEKQPSDSLK). Positions 229-279 (QATNSHSLAERVRREKISERMKFLQDLVPGCDKVTGKAVMLDEIINYVQSL) constitute a bHLH domain.

Homodimer. Interacts with IBH1. Binds reversibly to CRY2 after blue light illumination. In terms of tissue distribution, expressed constitutively in roots, leaves, stems, and flowers.

It localises to the nucleus. Transcriptional activator involved in cell elongation. Regulates the expression of a subset of genes involved in cell expansion by binding to the G-box motif. Binds to chromatin DNA of the FT gene and promotes its expression, and thus triggers flowering in response to blue light. This chain is Transcription factor bHLH76 (BHLH76), found in Arabidopsis thaliana (Mouse-ear cress).